Reading from the N-terminus, the 228-residue chain is Vesicle transport protein SEC20 (228 aa).

Over 1–199 the chain is Cytoplasmic; the sequence is MAAPQDVHVR…LITKYNRREL (199 aa). The stretch at 37-90 forms a coiled coil; that stretch reads LSELTELNTKVKEKFQQLKQRIQELEQSAREQDKESEKQLLLQEVENHKKQMLS. The chain crosses the membrane as a helical; Anchor for type IV membrane protein span at residues 200-220; sequence TDKLLIFLALALFLATVLYIV. Residues 221 to 228 are Lumenal-facing; it reads KKRLFPFL.

This sequence belongs to the SEC20 family. Component of a SNARE complex consisting of STX18, USE1L, BNIP1/SEC20L and SEC22B. Interacts directly with STX18, RINT1/TIP20L and NAPA. Interacts with ZW10 through RINT1. Interacts with BCL2. Interacts with RNF186. Interacts with RNF185. Interacts with SQSTM1; increased by 'Lys-63'-linked polyubiquitination of BNIP1. Post-translationally, polyubiquitinated. 'Lys-63'-linked polyubiquitination by RNF185 increases the interaction with the autophagy receptor SQSTM1. Undergoes 'Lys-29'- and 'Lys-63'-linked polyubiquitination by RNF186 that may regulate BNIP1 localization to the mitochondrion.

It is found in the endoplasmic reticulum membrane. The protein resides in the mitochondrion membrane. In terms of biological role, as part of a SNARE complex may be involved in endoplasmic reticulum membranes fusion and be required for the maintenance of endoplasmic reticulum organization. Also plays a role in apoptosis. It is for instance required for endoplasmic reticulum stress-induced apoptosis. As a substrate of RNF185 interacting with SQSTM1, might also be involved in mitochondrial autophagy. This chain is Vesicle transport protein SEC20, found in Mus musculus (Mouse).